The following is a 230-amino-acid chain: Urease accessory protein UreF (230 aa).

This sequence belongs to the UreF family. UreD, UreF and UreG form a complex that acts as a GTP-hydrolysis-dependent molecular chaperone, activating the urease apoprotein by helping to assemble the nickel containing metallocenter of UreC. The UreE protein probably delivers the nickel.

The protein localises to the cytoplasm. Its function is as follows. Required for maturation of urease via the functional incorporation of the urease nickel metallocenter. The protein is Urease accessory protein UreF of Chromohalobacter salexigens (strain ATCC BAA-138 / DSM 3043 / CIP 106854 / NCIMB 13768 / 1H11).